The primary structure comprises 339 residues: Longiborneol synthase CLM1 (339 aa).

Over residues 1–17 (MLATPTLSNFDKPSLPS) the composition is skewed to polar residues. The tract at residues 1–21 (MLATPTLSNFDKPSLPSSEGG) is disordered. The Mg(2+) site is built by Asp112, Asn241, Ser245, and Glu249. Positions 241-249 (NDVLSFYKE) match the NDXXSXXXE magnesium-binding motif motif.

It belongs to the trichodiene synthase family. The cofactor is Mg(2+). Requires Mn(2+) as cofactor.

It carries out the reaction (2E,6E)-farnesyl diphosphate + H2O = (-)-longiborneol + diphosphate. It participates in mycotoxin biosynthesis. Terpene cyclase involved in the biosynthesis of culmorin, a tricyclic sesquiterpene diol reported to have antifungal activity and some phytotoxicity to wheat coleoptile tissue, contributing to Fusarium head blight disease. The terpene cyclase CLM1 is responsible for the cyclization of farnesyl diphosphate into the intermediate longiborneol. Longiborneol is then hydroxylated in a regio- and endo-stereoselective manner at position C-11 by the cytochrome P450 monooxygenase CLM2 to produce culmorin. Additional non-specific oxygenases are also able to hydroxylate longiborneol at other sites than C-11 leading to 3-hydroxylongiborneol, 5-hydroxylongiborneol, 12-hydroxylongiborneol and 15-hydroxylongiborneol. Moreover, another oxygenase capable of installing a C-11 exo-hydroxy group in longiborneol can also yield 11-epi-acetylculmorin. The production of these longiborneol derivatives is dwarfed by the high abundance of culmorin, suggesting that CLM2 displays superior enzymatic activity to the unidentified, possibly promiscuous, additional oxygenases. The sequence is that of Longiborneol synthase CLM1 from Gibberella zeae (strain ATCC MYA-4620 / CBS 123657 / FGSC 9075 / NRRL 31084 / PH-1) (Wheat head blight fungus).